Reading from the N-terminus, the 487-residue chain is ATP synthase subunit beta (487 aa).

Position 164-171 (164-171 (GGAGVGKT)) interacts with ATP.

Belongs to the ATPase alpha/beta chains family. In terms of assembly, F-type ATPases have 2 components, CF(1) - the catalytic core - and CF(0) - the membrane proton channel. CF(1) has five subunits: alpha(3), beta(3), gamma(1), delta(1), epsilon(1). CF(0) has four main subunits: a(1), b(1), b'(1) and c(9-12).

Its subcellular location is the cellular thylakoid membrane. The enzyme catalyses ATP + H2O + 4 H(+)(in) = ADP + phosphate + 5 H(+)(out). Its function is as follows. Produces ATP from ADP in the presence of a proton gradient across the membrane. The catalytic sites are hosted primarily by the beta subunits. The polypeptide is ATP synthase subunit beta (Synechococcus sp. (strain CC9311)).